A 400-amino-acid chain; its full sequence is Tryptophan--tRNA ligase (400 aa).

The 'HIGH' region signature appears at 12–20; it reads PTGALHLGH. The interval 173–241 is insert; that stretch reads REPGFEQKAL…RLFGYLEGAR (69 aa). Residues 265–269 carry the 'KMSKS' region motif; that stretch reads KMSKS. Lys268 contributes to the ATP binding site. A disordered region spans residues 280–305; the sequence is KASVEKKVRTMPTDPARVRRTDPGDP. Basic and acidic residues predominate over residues 295 to 304; that stretch reads ARVRRTDPGD.

The protein belongs to the class-I aminoacyl-tRNA synthetase family. Homodimer.

Its subcellular location is the cytoplasm. It carries out the reaction tRNA(Trp) + L-tryptophan + ATP = L-tryptophyl-tRNA(Trp) + AMP + diphosphate + H(+). This is Tryptophan--tRNA ligase (trpS) from Ralstonia nicotianae (strain ATCC BAA-1114 / GMI1000) (Ralstonia solanacearum).